Reading from the N-terminus, the 328-residue chain is Interleukin-12 subunit beta (328 aa).

A signal peptide spans Met1–Ala22. The Ig-like C2-type domain occupies Asp29–Lys106. An intrachain disulfide couples Cys50 to Cys90. 3 N-linked (GlcNAc...) asparagine glycosylation sites follow: Asn125, Asn135, and Asn222. A Fibronectin type-III domain is found at Pro237–Ser328.

Belongs to the IL-12B family. As to quaternary structure, heterodimer with IL12A; disulfide-linked. The heterodimer is known as interleukin IL-12. Heterodimer with IL23A; disulfide-linked. The heterodimer is known as interleukin IL-23. Also secreted as a monomer. Interacts with NBR1; this interaction promotes IL-12 secretion.

The protein resides in the secreted. Cytokine that can act as a growth factor for activated T and NK cells, enhance the lytic activity of NK/lymphokine-activated killer cells, and stimulate the production of IFN-gamma by resting PBMC. In terms of biological role, associates with IL23A to form the IL-23 interleukin, a heterodimeric cytokine which functions in innate and adaptive immunity. IL-23 may constitute with IL-17 an acute response to infection in peripheral tissues. IL-23 binds to a heterodimeric receptor complex composed of IL12RB1 and IL23R, activates the Jak-Stat signaling cascade, stimulates memory rather than naive T-cells and promotes production of pro-inflammatory cytokines. IL-23 induces autoimmune inflammation and thus may be responsible for autoimmune inflammatory diseases and may be important for tumorigenesis. The polypeptide is Interleukin-12 subunit beta (IL12B) (Macaca mulatta (Rhesus macaque)).